The sequence spans 176 residues: UPF0098 protein Rv2140c (176 aa).

Position 2 is an N-acetylthreonine (threonine 2).

It belongs to the UPF0098 family.

The chain is UPF0098 protein Rv2140c from Mycobacterium tuberculosis (strain ATCC 25618 / H37Rv).